The primary structure comprises 320 residues: Prophage side tail fiber protein homolog StfQ (320 aa).

Disordered stretches follow at residues 147-213 (SGRA…HKSS) and 241-270 (TTSG…TAAS). 2 stretches are compositionally biased toward polar residues: residues 172–206 (DLGT…NSAG) and 241–258 (TTSG…SSDG). The segment covering 261–270 (THSLSGTAAS) has biased composition (low complexity).

It belongs to the tail fiber family.

The polypeptide is Prophage side tail fiber protein homolog StfQ (stfQ) (Escherichia coli (strain K12)).